The primary structure comprises 327 residues: GPI-linked NAD(P)(+)--arginine ADP-ribosyltransferase 1 (327 aa).

A signal peptide spans 1 to 22 (MWVPAVANLLLLSLGLLEAIQA). Intrachain disulfides connect Cys-53–Cys-277 and Cys-174–Cys-224. Asn-65 carries an N-linked (GlcNAc...) asparagine glycan. The TR mART core domain occupies 73 to 273 (KVYADGWALA…IYLKALGKRS (201 aa)). 2 residues coordinate NAD(+): Tyr-121 and Arg-179. Residues Arg-179 and Ser-202 contribute to the active site. Ser-233 contributes to the NAD(+) binding site. Residue Glu-240 is part of the active site. The N-linked (GlcNAc...) asparagine glycan is linked to Asn-253. Ser-295 carries the GPI-anchor amidated serine lipid modification. A propeptide spans 296–327 (ASAQERLSTAWSLLLLLAFLAVGPFPGSPGLF) (removed in mature form).

The protein belongs to the Arg-specific ADP-ribosyltransferase family. As to expression, primarily in skeletal and cardiac muscle.

Its subcellular location is the sarcoplasmic reticulum membrane. It carries out the reaction L-arginyl-[protein] + NAD(+) = N(omega)-(ADP-D-ribosyl)-L-arginyl-[protein] + nicotinamide + H(+). In terms of biological role, has ADP-ribosyltransferase activity toward GLP1R. The sequence is that of GPI-linked NAD(P)(+)--arginine ADP-ribosyltransferase 1 (ART1) from Oryctolagus cuniculus (Rabbit).